We begin with the raw amino-acid sequence, 152 residues long: Large ribosomal subunit protein uL15 (152 aa).

The segment at 1 to 56 (MELNTLKPAKNSVKQNTRYGRGQGSGKGGTSTRGHKGAKSRSGYKSKPGFEGGQLP) is disordered. Gly residues predominate over residues 21-31 (RGQGSGKGGTS). Basic residues predominate over residues 33–44 (RGHKGAKSRSGY).

The protein belongs to the universal ribosomal protein uL15 family. In terms of assembly, part of the 50S ribosomal subunit.

Functionally, binds to the 23S rRNA. The protein is Large ribosomal subunit protein uL15 of Amoebophilus asiaticus (strain 5a2).